The sequence spans 279 residues: Estrogen receptor beta (279 aa).

The 235-residue stretch at S27–H261 folds into the NR LBD domain.

Belongs to the nuclear hormone receptor family. NR3 subfamily. In terms of assembly, binds DNA as a homodimer. Can form a heterodimer with ESR1. Interacts with NCOA1, NCOA3, NCOA5 and NCOA6 coactivators, leading to a strong increase of transcription of target genes. Interacts with UBE1C and AKAP13. Interacts with DNTTIP2. Interacts with CCDC62 in the presence of estradiol/E2; this interaction seems to enhance the transcription of target genes. Interacts with DNAAF4. Interacts with PRMT2. Interacts with CCAR2 (via N-terminus) in a ligand-independent manner. Interacts with RBM39, in the presence of estradiol (E2). Interacts with STUB1/CHIP.

The protein localises to the nucleus. In terms of biological role, nuclear hormone receptor. Binds estrogens with an affinity similar to that of ESR1/ER-alpha, and activates expression of reporter genes containing estrogen response elements (ERE) in an estrogen-dependent manner. This is Estrogen receptor beta (ESR2) from Macaca mulatta (Rhesus macaque).